The chain runs to 462 residues: N-myc proto-oncogene protein (462 aa).

Residues 19–47 (LEFDSLQPCFYPDEDDFYFGGPDSTPPGE) are interaction with AURKA. The tract at residues 61-90 (LSPSRAFPEHSPEPSNWATEMLLPEADLWG) is interaction with AURKA and FBXW7. Positions 76-85 (NWATEMLLPE) match the 9aaTAD motif. 3 disordered regions span residues 134–177 (KLQH…ATLP), 232–289 (AAPA…SSNN), and 332–390 (APSP…LERQ). 2 stretches are compositionally biased toward low complexity: residues 143-176 (GVSSACSAPGVGASSPGGRALGGSSSASHTGATL) and 232-244 (AAPARAGGRPASS). Over residues 257 to 276 (TLSDSDDEDDEEEDEEEEID) the composition is skewed to acidic residues. A phosphoserine; by CK2 mark is found at S259 and S261. The bHLH domain maps to 379–431 (ERRRNHNILERQRRNDLRSSFLTLRDHVPELVKNEKAAKVVILKKATEYVHAL). The interval 431-452 (LQANEHQLLLEKEKLQARQQQL) is leucine-zipper.

Efficient DNA binding requires dimerization with another bHLH protein. Binds DNA as a heterodimer with MAX. Interacts with KDM5A, KDM5B and HUWE1. Interacts with MYCNOS. Interacts with AURKA; interaction is phospho-independent and triggers AURKA activation; AURKA competes with FBXW7 for binding to unphosphorylated MYCN but not for binding to unphosphorylated MYCN. Interacts with FBXW7; FBXW7 competes with AURKA for binding to unphosphorylated MYCN but not for binding to phosphorylated MYCN. Phosphorylated by GSK3-beta which may promote its degradation. Phosphorylated by AURKA.

Its subcellular location is the nucleus. Its function is as follows. Positively regulates the transcription of MYCNOS in neuroblastoma cells. The protein is N-myc proto-oncogene protein (Mycn) of Mus musculus (Mouse).